The following is a 241-amino-acid chain: UDP-2,3-diacylglucosamine hydrolase (241 aa).

The Mn(2+) site is built by Asp8, His10, Asp41, Asn78, and His113. 78-79 (NR) provides a ligand contact to substrate. 5 residues coordinate substrate: Asp121, Ser159, Asn163, Lys166, and His194. Residues His194 and His196 each coordinate Mn(2+).

It belongs to the LpxH family. The cofactor is Mn(2+).

It localises to the cell inner membrane. It carries out the reaction UDP-2-N,3-O-bis[(3R)-3-hydroxytetradecanoyl]-alpha-D-glucosamine + H2O = 2-N,3-O-bis[(3R)-3-hydroxytetradecanoyl]-alpha-D-glucosaminyl 1-phosphate + UMP + 2 H(+). It functions in the pathway glycolipid biosynthesis; lipid IV(A) biosynthesis; lipid IV(A) from (3R)-3-hydroxytetradecanoyl-[acyl-carrier-protein] and UDP-N-acetyl-alpha-D-glucosamine: step 4/6. Functionally, hydrolyzes the pyrophosphate bond of UDP-2,3-diacylglucosamine to yield 2,3-diacylglucosamine 1-phosphate (lipid X) and UMP by catalyzing the attack of water at the alpha-P atom. Involved in the biosynthesis of lipid A, a phosphorylated glycolipid that anchors the lipopolysaccharide to the outer membrane of the cell. The polypeptide is UDP-2,3-diacylglucosamine hydrolase (Shewanella putrefaciens (strain CN-32 / ATCC BAA-453)).